We begin with the raw amino-acid sequence, 620 residues long: Translation initiation factor IF-2 (620 aa).

Residues 119–288 form the tr-type G domain; sequence ERPPIVTIMG…IILISELENL (170 aa). A G1 region spans residues 128–135; the sequence is GHVDHGKT. 128 to 135 lines the GTP pocket; sequence GHVDHGKT. Residues 153–157 are G2; sequence GITQA. A G3 region spans residues 175 to 178; that stretch reads DTPG. Residues 175 to 179 and 229 to 232 each bind GTP; these read DTPGH and NKID. The tract at residues 229–232 is G4; sequence NKID. The segment at 265–267 is G5; that stretch reads SAI.

It belongs to the TRAFAC class translation factor GTPase superfamily. Classic translation factor GTPase family. IF-2 subfamily.

It localises to the cytoplasm. In terms of biological role, one of the essential components for the initiation of protein synthesis. Protects formylmethionyl-tRNA from spontaneous hydrolysis and promotes its binding to the 30S ribosomal subunits. Also involved in the hydrolysis of GTP during the formation of the 70S ribosomal complex. The protein is Translation initiation factor IF-2 of Mycoplasma capricolum subsp. capricolum (strain California kid / ATCC 27343 / NCTC 10154).